Reading from the N-terminus, the 452-residue chain is Trigger factor (452 aa).

Positions 171–256 constitute a PPIase FKBP-type domain; sequence GDRVKVNFKG…ATAIETPEEK (86 aa).

This sequence belongs to the FKBP-type PPIase family. Tig subfamily.

The protein resides in the cytoplasm. The catalysed reaction is [protein]-peptidylproline (omega=180) = [protein]-peptidylproline (omega=0). Its function is as follows. Involved in protein export. Acts as a chaperone by maintaining the newly synthesized protein in an open conformation. Functions as a peptidyl-prolyl cis-trans isomerase. The chain is Trigger factor from Bradyrhizobium sp. (strain BTAi1 / ATCC BAA-1182).